Here is a 388-residue protein sequence, read N- to C-terminus: FBD-associated F-box protein At5g60610 (388 aa).

Residues 1-47 (MDRISGLPDELLVKIISFVPTKVAVSTSILSKRWESLWKWVPKLECD) form the F-box domain. One can recognise an FBD domain in the interval 337–388 (NWKNIQRSVPKCLKSSLKTLEFAGYTARPEERDFLSFIFKKARCLKTSSISH).

In Arabidopsis thaliana (Mouse-ear cress), this protein is FBD-associated F-box protein At5g60610.